The primary structure comprises 159 residues: Histone H2A (159 aa).

Residues 1-10 (MDSTGTGAGG) show a composition bias toward gly residues. Disordered stretches follow at residues 1 to 31 (MDST…SVSR) and 133 to 159 (KTAE…PKKA). Basic residues-rich tracts occupy residues 11–29 (KGKK…KKSV) and 149–159 (PKKAAKSPKKA). Short sequence motifs (SPKK motif) lie at residues 148–151 (SPKK) and 155–158 (SPKK).

This sequence belongs to the histone H2A family. The nucleosome is a histone octamer containing two molecules each of H2A, H2B, H3 and H4 assembled in one H3-H4 heterotetramer and two H2A-H2B heterodimers. The octamer wraps approximately 147 bp of DNA.

Its subcellular location is the nucleus. The protein localises to the chromosome. Its function is as follows. Core component of nucleosome. Nucleosomes wrap and compact DNA into chromatin, limiting DNA accessibility to the cellular machineries which require DNA as a template. Histones thereby play a central role in transcription regulation, DNA repair, DNA replication and chromosomal stability. DNA accessibility is regulated via a complex set of post-translational modifications of histones, also called histone code, and nucleosome remodeling. This is Histone H2A from Zea mays (Maize).